We begin with the raw amino-acid sequence, 250 residues long: 5-oxoprolinase subunit A (250 aa).

Belongs to the LamB/PxpA family. In terms of assembly, forms a complex composed of PxpA, PxpB and PxpC.

It catalyses the reaction 5-oxo-L-proline + ATP + 2 H2O = L-glutamate + ADP + phosphate + H(+). Catalyzes the cleavage of 5-oxoproline to form L-glutamate coupled to the hydrolysis of ATP to ADP and inorganic phosphate. The sequence is that of 5-oxoprolinase subunit A from Pseudomonas fluorescens (strain ATCC BAA-477 / NRRL B-23932 / Pf-5).